The chain runs to 415 residues: Histidine--tRNA ligase (415 aa).

Belongs to the class-II aminoacyl-tRNA synthetase family. In terms of assembly, homodimer.

The protein resides in the cytoplasm. The enzyme catalyses tRNA(His) + L-histidine + ATP = L-histidyl-tRNA(His) + AMP + diphosphate + H(+). The chain is Histidine--tRNA ligase from Clostridium perfringens (strain SM101 / Type A).